We begin with the raw amino-acid sequence, 583 residues long: Sphingomyelin phosphodiesterase A (583 aa).

The N-terminal stretch at 1-21 (MKSIPIILLVLIGLLLASVYS) is a signal peptide. The Saposin B-type domain maps to 51–133 (IQLSCDVCQI…GYFKICSATG (83 aa)). 3 cysteine pairs are disulfide-bonded: cysteine 55–cysteine 129, cysteine 58–cysteine 123, and cysteine 86–cysteine 97. Asparagine 72 is a glycosylation site (N-linked (GlcNAc...) asparagine). Asparagine 182 carries an N-linked (GlcNAc...) asparagine glycan. Aspartate 193 and histidine 195 together coordinate Zn(2+). Cysteine 214 and cysteine 229 are disulfide-bonded. Zn(2+) contacts are provided by aspartate 258 and asparagine 298. The N-linked (GlcNAc...) asparagine glycan is linked to asparagine 377. Residues histidine 401, histidine 436, and histidine 438 each contribute to the Zn(2+) site. N-linked (GlcNAc...) asparagine glycans are attached at residues asparagine 495, asparagine 500, asparagine 537, and asparagine 547. Cysteine 567 and cysteine 580 are disulfide-bonded.

Belongs to the acid sphingomyelinase family. Zn(2+) is required as a cofactor.

It is found in the secreted. Its function is as follows. Converts sphingomyelin to ceramide. The protein is Sphingomyelin phosphodiesterase A (sgmA) of Dictyostelium discoideum (Social amoeba).